A 247-amino-acid chain; its full sequence is Carboxy-S-adenosyl-L-methionine synthase (247 aa).

Residues Tyr-39, 64 to 66, 89 to 90, 117 to 118, Asn-132, and Arg-199 each bind S-adenosyl-L-methionine; these read GCS, DN, and DI.

The protein belongs to the class I-like SAM-binding methyltransferase superfamily. Cx-SAM synthase family. Homodimer.

The enzyme catalyses prephenate + S-adenosyl-L-methionine = carboxy-S-adenosyl-L-methionine + 3-phenylpyruvate + H2O. In terms of biological role, catalyzes the conversion of S-adenosyl-L-methionine (SAM) to carboxy-S-adenosyl-L-methionine (Cx-SAM). This chain is Carboxy-S-adenosyl-L-methionine synthase, found in Escherichia coli O139:H28 (strain E24377A / ETEC).